Consider the following 198-residue polypeptide: Small ribosomal subunit protein uS5 (198 aa).

The region spanning L46–V109 is the S5 DRBM domain.

The protein belongs to the universal ribosomal protein uS5 family. Part of the 30S ribosomal subunit. Contacts protein S4.

With S4 and S12 plays an important role in translational accuracy. The chain is Small ribosomal subunit protein uS5 from Archaeoglobus fulgidus (strain ATCC 49558 / DSM 4304 / JCM 9628 / NBRC 100126 / VC-16).